The primary structure comprises 297 residues: MLKVNNLSKIWKDFKLKNVSFEIDREYCVILGPSGAGKSVLIKCIAGILKPDSGRIILNGEDITNLPPEKRNVGYVPQNYALFPNKNVYKNIAYGLIIKKVNKLEIDRKVKEIAEFLNISHLLNRDVKTLSGGEQQRVALARALILNPSILLLDEPTSAVDIKIKESIISELKKIKHIPVLHITHDLAEARTLGEKVGIFMNGELIAFGDKSILKKPKNKKVAEFLGFNIIDDKAIAPEDVIIKDGNGGEVVNIIDYGKYKKVFVKYNGYIIKAFTERDLNIGDNVGLEFREQTKLT.

Residues L2–L226 enclose the ABC transporter domain. G32–S39 provides a ligand contact to ATP.

It belongs to the ABC transporter superfamily. Sulfate/tungstate importer (TC 3.A.1.6) family. In terms of assembly, the complex is composed of two ATP-binding proteins (WtpC), two transmembrane proteins (WtpB) and a solute-binding protein (WtpA).

The protein localises to the cell membrane. The enzyme catalyses tungstate(in) + ATP + H2O = tungstate(out) + ADP + phosphate + H(+). Its function is as follows. Part of the ABC transporter complex WtpABC involved in molybdate/tungstate import. Responsible for energy coupling to the transport system. The chain is Molybdate/tungstate import ATP-binding protein WtpC (wtpC) from Methanocaldococcus jannaschii (strain ATCC 43067 / DSM 2661 / JAL-1 / JCM 10045 / NBRC 100440) (Methanococcus jannaschii).